Consider the following 567-residue polypeptide: Thiol:disulfide interchange protein DsbD (567 aa).

Residues 1 to 19 (MAQRIFTLILLLCSTSAFA) form the signal peptide. 2 disulfides stabilise this stretch: Cys122–Cys128 and Cys185–Cys307. 8 helical membrane-spanning segments follow: residues 166 to 186 (LPFS…TPCV), 210 to 230 (LLLA…LGLV), 246 to 266 (YVLI…FGLF), 299 to 319 (IAGL…LLYI), 326 to 346 (WLGG…LMLV), 360 to 380 (WMAH…VFLL), 387 to 407 (AWGL…AFIT), and 418 to 438 (IVQI…QDWA). One can recognise a Thioredoxin domain in the interval 435–567 (QDWAFGSPSA…FSAHLHDRQP (133 aa)). Cys482 and Cys485 are joined by a disulfide.

This sequence belongs to the thioredoxin family. DsbD subfamily.

It is found in the cell inner membrane. The catalysed reaction is [protein]-dithiol + NAD(+) = [protein]-disulfide + NADH + H(+). It carries out the reaction [protein]-dithiol + NADP(+) = [protein]-disulfide + NADPH + H(+). In terms of biological role, required to facilitate the formation of correct disulfide bonds in some periplasmic proteins and for the assembly of the periplasmic c-type cytochromes. Acts by transferring electrons from cytoplasmic thioredoxin to the periplasm. This transfer involves a cascade of disulfide bond formation and reduction steps. In Salmonella choleraesuis (strain SC-B67), this protein is Thiol:disulfide interchange protein DsbD.